We begin with the raw amino-acid sequence, 51 residues long: Sperm protamine P1 (51 aa).

This sequence belongs to the protamine P1 family. In terms of tissue distribution, testis.

Its subcellular location is the nucleus. The protein resides in the chromosome. In terms of biological role, protamines substitute for histones in the chromatin of sperm during the haploid phase of spermatogenesis. They compact sperm DNA into a highly condensed, stable and inactive complex. The chain is Sperm protamine P1 (PRM1) from Colobus guereza (Mantled guereza).